The primary structure comprises 57 residues: uncharacterized protein (57 aa).

This is an uncharacterized protein from Archaeoglobus fulgidus (strain ATCC 49558 / DSM 4304 / JCM 9628 / NBRC 100126 / VC-16).